Consider the following 3106-residue polypeptide: Cilia- and flagella-associated protein 54 (3106 aa).

3 stretches are compositionally biased toward low complexity: residues 1-24 (MASSRSSSSSSEESPDSETSVSPV), 34-48 (STAVLKSPSESKSSS), and 2356-2368 (ESCSPTSPETSTT). Disordered regions lie at residues 1 to 58 (MASS…THSE) and 2354 to 2374 (PEESCSPTSPETSTTESKDDS).

The protein belongs to the CFAP54 family. In terms of tissue distribution, expressed at high level in the testis and at a low level in the lung and brain.

The protein localises to the cytoplasm. It localises to the cytoskeleton. Its subcellular location is the cilium axoneme. Required for assembly and function of cilia and flagella. The chain is Cilia- and flagella-associated protein 54 from Mus musculus (Mouse).